Here is a 1227-residue protein sequence, read N- to C-terminus: Methionine synthase (1227 aa).

In terms of domain architecture, Hcy-binding spans 2 to 325 (SSKVEQLRAQ…EHIAAMSRAV (324 aa)). Cys-247, Cys-310, and Cys-311 together coordinate Zn(2+). The Pterin-binding domain maps to 356-617 (FVNVGERTNV…LPAELRDAVE (262 aa)). Residues 650-744 (QQAEWRSWDV…FIEASKEKGS (95 aa)) enclose the B12-binding N-terminal domain. Methylcob(III)alamin contacts are provided by residues Glu-694, 756-760 (GDVHD), His-759, Ser-804, Thr-808, and Ala-860. The B12-binding domain maps to 746-881 (NGKMVIATVK…SDTQRDDFVA (136 aa)). Positions 897 to 1227 (KKPRTPPVTL…LAPNLGYDAD (331 aa)) constitute an AdoMet activation domain. Residues Asp-946, Arg-1134, and 1189 to 1190 (YF) each bind S-adenosyl-L-methionine.

It belongs to the vitamin-B12 dependent methionine synthase family. Requires methylcob(III)alamin as cofactor. Zn(2+) is required as a cofactor.

It catalyses the reaction (6S)-5-methyl-5,6,7,8-tetrahydrofolate + L-homocysteine = (6S)-5,6,7,8-tetrahydrofolate + L-methionine. It functions in the pathway amino-acid biosynthesis; L-methionine biosynthesis via de novo pathway; L-methionine from L-homocysteine (MetH route): step 1/1. Its function is as follows. Catalyzes the transfer of a methyl group from methyl-cobalamin to homocysteine, yielding enzyme-bound cob(I)alamin and methionine. Subsequently, remethylates the cofactor using methyltetrahydrofolate. The polypeptide is Methionine synthase (metH) (Salmonella typhimurium (strain LT2 / SGSC1412 / ATCC 700720)).